Here is a 262-residue protein sequence, read N- to C-terminus: Cytochrome c oxidase subunit 3 (262 aa).

7 helical membrane-spanning segments follow: residues 16 to 36 (PWPY…VVYF), 39 to 59 (SQTW…IVWW), 83 to 103 (GMLL…WAFF), 128 to 148 (FSVP…VTWA), 160 to 180 (AING…LQAM), 198 to 218 (FFVA…FLAV), and 241 to 261 (WYWH…YWWG).

It belongs to the cytochrome c oxidase subunit 3 family. In terms of assembly, component of the cytochrome c oxidase (complex IV, CIV), a multisubunit enzyme composed of a catalytic core of 3 subunits and several supernumerary subunits. The complex exists as a monomer or a dimer and forms supercomplexes (SCs) in the inner mitochondrial membrane with ubiquinol-cytochrome c oxidoreductase (cytochrome b-c1 complex, complex III, CIII).

It localises to the mitochondrion inner membrane. The catalysed reaction is 4 Fe(II)-[cytochrome c] + O2 + 8 H(+)(in) = 4 Fe(III)-[cytochrome c] + 2 H2O + 4 H(+)(out). Component of the cytochrome c oxidase, the last enzyme in the mitochondrial electron transport chain which drives oxidative phosphorylation. The respiratory chain contains 3 multisubunit complexes succinate dehydrogenase (complex II, CII), ubiquinol-cytochrome c oxidoreductase (cytochrome b-c1 complex, complex III, CIII) and cytochrome c oxidase (complex IV, CIV), that cooperate to transfer electrons derived from NADH and succinate to molecular oxygen, creating an electrochemical gradient over the inner membrane that drives transmembrane transport and the ATP synthase. Cytochrome c oxidase is the component of the respiratory chain that catalyzes the reduction of oxygen to water. Electrons originating from reduced cytochrome c in the intermembrane space (IMS) are transferred via the dinuclear copper A center (CU(A)) of subunit 2 and heme A of subunit 1 to the active site in subunit 1, a binuclear center (BNC) formed by heme A3 and copper B (CU(B)). The BNC reduces molecular oxygen to 2 water molecules using 4 electrons from cytochrome c in the IMS and 4 protons from the mitochondrial matrix. The protein is Cytochrome c oxidase subunit 3 (COIII) of Metridium senile (Brown sea anemone).